Consider the following 281-residue polypeptide: Pantothenate synthetase (281 aa).

26–33 is an ATP binding site; that stretch reads MGNLHDGH. The Proton donor role is filled by histidine 33. Glutamine 57 contributes to the (R)-pantoate binding site. Position 57 (glutamine 57) interacts with beta-alanine. 145–148 provides a ligand contact to ATP; that stretch reads GEKD. Glutamine 151 contributes to the (R)-pantoate binding site. 182–185 provides a ligand contact to ATP; that stretch reads MSSR.

This sequence belongs to the pantothenate synthetase family. Homodimer.

The protein localises to the cytoplasm. It catalyses the reaction (R)-pantoate + beta-alanine + ATP = (R)-pantothenate + AMP + diphosphate + H(+). It functions in the pathway cofactor biosynthesis; (R)-pantothenate biosynthesis; (R)-pantothenate from (R)-pantoate and beta-alanine: step 1/1. Functionally, catalyzes the condensation of pantoate with beta-alanine in an ATP-dependent reaction via a pantoyl-adenylate intermediate. The chain is Pantothenate synthetase from Idiomarina loihiensis (strain ATCC BAA-735 / DSM 15497 / L2-TR).